The chain runs to 283 residues: Pantothenate synthetase (283 aa).

30 to 37 is an ATP binding site; that stretch reads MGNLHAGH. H37 acts as the Proton donor in catalysis. Position 61 (Q61) interacts with (R)-pantoate. Position 61 (Q61) interacts with beta-alanine. Residue 149–152 participates in ATP binding; sequence GEKD. A (R)-pantoate-binding site is contributed by Q155. ATP contacts are provided by residues L178 and 186 to 189; that span reads MSSR.

The protein belongs to the pantothenate synthetase family. Homodimer.

It is found in the cytoplasm. The enzyme catalyses (R)-pantoate + beta-alanine + ATP = (R)-pantothenate + AMP + diphosphate + H(+). Its pathway is cofactor biosynthesis; (R)-pantothenate biosynthesis; (R)-pantothenate from (R)-pantoate and beta-alanine: step 1/1. Its function is as follows. Catalyzes the condensation of pantoate with beta-alanine in an ATP-dependent reaction via a pantoyl-adenylate intermediate. The sequence is that of Pantothenate synthetase from Hahella chejuensis (strain KCTC 2396).